We begin with the raw amino-acid sequence, 187 residues long: MNVVKRPLDISQLPDAGEVIVDAEGHVAGRLATYIAKALLERPNLRIVVVNAEKLVITGDEKMVIEWFKRKISEWRTHYNPEKAGPKVPRRPDRVFKRIVRGMLPKKSETGRSALKRLRVYMSIPIEIMQRKRLVLYEVPEAKLRLRPLLQYTTLEEVWRSIDPEAWEKWRRAVEVWGKKLKQVASG.

Belongs to the universal ribosomal protein uL13 family. In terms of assembly, part of the 50S ribosomal subunit.

In terms of biological role, this protein is one of the early assembly proteins of the 50S ribosomal subunit, although it is not seen to bind rRNA by itself. It is important during the early stages of 50S assembly. In Pyrobaculum aerophilum (strain ATCC 51768 / DSM 7523 / JCM 9630 / CIP 104966 / NBRC 100827 / IM2), this protein is Large ribosomal subunit protein uL13.